We begin with the raw amino-acid sequence, 157 residues long: Protein E6 (157 aa).

2 zinc fingers span residues 41–77 (CNFCGKFLNYLEACEFDYKKLSLIWKDYCVFACCRVC) and 114–150 (CQTCLAFLDIIEKLDCCGRGLPFHKVRNAWKGICRQC).

This sequence belongs to the papillomaviridae E6 protein family. In terms of assembly, forms homodimers. Interacts with ubiquitin-protein ligase UBE3A/E6-AP; this interaction stimulates UBE3A ubiquitin activity. Interacts with host BAK1.

The protein resides in the host cytoplasm. It localises to the host nucleus. In terms of biological role, plays a major role in the induction and maintenance of cellular transformation. E6 associates with host UBE3A/E6-AP ubiquitin-protein ligase and modulates its activity. Protects host keratinocytes from apoptosis by mediating the degradation of host BAK1. May also inhibit host immune response. The polypeptide is Protein E6 (Human papillomavirus type 5b).